The primary structure comprises 542 residues: MTTQTPSLPNKPETLPTNTLDKSLDRQMIVILDFGSQYSELIARRIRETQVYSEVLSYRTTAQKLRQLNPKGIILSGGPNSVYDDRAPQCDPDIWQLGIPVLGVCYGMQLMVKQLGGQVEKALRGEYGKASLRIDDPTDLLTNVEDGSTMWMSHGDSCTRLPEGFSILAHTENTLCAAIADHDKKLFGVQFHPEVVHSVDGIALIRNFVYHICECEPTWTTEAFVDETIREIRAKVRDKRVLLALSGGVDSSTLAFLLHQAIGDNLTCMFIDQGFMRKGEPERLMDIFDKQFHIPVEYVNARDRFLKQLEGVTDPEKKRRLIGHEFIQVFEEESKRLGPFDYLAQGTLYPDVIESADTNIDPKTGERVAVKIKSHHNVGGLPKDLRFKLVEPLRKLFKDEVRKVGRSIGLPEEIVRRHPFPGPGLAIRIIGEVTSERLNILRDADFVVRDEIGKQGMYHDFWQAFAVLLPIRSVGVMGDQRTYAHPIVLRLISSEDGMTADWSRVPYDLLETISNRIVNEVKGVNRVVYDITSKPPGTIEWE.

One can recognise a Glutamine amidotransferase type-1 domain in the interval 28-218 (MIVILDFGSQ…VYHICECEPT (191 aa)). Cys105 functions as the Nucleophile in the catalytic mechanism. Catalysis depends on residues His192 and Glu194. The region spanning 219–417 (WTTEAFVDET…IGLPEEIVRR (199 aa)) is the GMPS ATP-PPase domain. 246-252 (SGGVDSS) is a binding site for ATP.

As to quaternary structure, homodimer.

The enzyme catalyses XMP + L-glutamine + ATP + H2O = GMP + L-glutamate + AMP + diphosphate + 2 H(+). The protein operates within purine metabolism; GMP biosynthesis; GMP from XMP (L-Gln route): step 1/1. Catalyzes the synthesis of GMP from XMP. The chain is GMP synthase [glutamine-hydrolyzing] from Crocosphaera subtropica (strain ATCC 51142 / BH68) (Cyanothece sp. (strain ATCC 51142)).